The primary structure comprises 130 residues: Small ribosomal subunit protein uS11 (130 aa).

This sequence belongs to the universal ribosomal protein uS11 family. As to quaternary structure, part of the 30S ribosomal subunit. Interacts with proteins S7 and S18. Binds to IF-3.

In terms of biological role, located on the platform of the 30S subunit, it bridges several disparate RNA helices of the 16S rRNA. Forms part of the Shine-Dalgarno cleft in the 70S ribosome. This is Small ribosomal subunit protein uS11 from Aliarcobacter butzleri (strain RM4018) (Arcobacter butzleri).